Consider the following 583-residue polypeptide: MKRSMYAGRVRSEHIGTSITLKGWVGRRRDLGGLIFIDLRDREGIMQLVINPEEVSASVMATAESLRSEFVIEVSGVVTAREQANDNLPTGEVELKVQELSVLNTSKTTPFEIKDGIEANDDTRMRYRYLDLRRPEMLENFKLRAKVTHSIRNYLDNLEFIDVETPMLTKSTPEGARDYLVPSRVNQGHFYALPQSPQITKQLLMNAGFDRYYQIVKCFRDEDLRGDRQPEFTQVDLETSFLSDQEIQDIVEGMIAKVMKDTKGLEVSLPFPRMAYDDAMNNYGSDKPDTRFDMLLQDLTEVVKEVDFKVFSEASVVKAIVVKNKADKYSRKNIDKLTEIAKQYGAKGLAWLKYADNTISGPVAKFLTAIEDRLTEALQLENNDLILFVADSLEVANETLGALRTRIAKELELIDYSKFNFLWIVDWPMFEWSEEEGRYMSAHHPFTLPTAETAHELEGDLAKVRAVAYDIVLNGYELGGGSLRINQKDTQERMFKALGFSAESAQEQFGFLLEAMDYGFPPHGGLAIGLDRFVMLLAGKDNIREVIAFPKNNKASDPMTQAPSLVSEQQLEELSLTVESYEN.

Glutamate 174 contacts L-aspartate. The aspartate stretch occupies residues 198 to 201 (QITK). Position 220 (arginine 220) interacts with L-aspartate. ATP-binding positions include 220-222 (RDE) and glutamine 229. Residue histidine 443 participates in L-aspartate binding. Glutamate 477 contacts ATP. Residue arginine 484 participates in L-aspartate binding. 529–532 (GLDR) is an ATP binding site.

The protein belongs to the class-II aminoacyl-tRNA synthetase family. Type 1 subfamily. In terms of assembly, homodimer.

The protein localises to the cytoplasm. The enzyme catalyses tRNA(Asp) + L-aspartate + ATP = L-aspartyl-tRNA(Asp) + AMP + diphosphate. In terms of biological role, catalyzes the attachment of L-aspartate to tRNA(Asp) in a two-step reaction: L-aspartate is first activated by ATP to form Asp-AMP and then transferred to the acceptor end of tRNA(Asp). The polypeptide is Aspartate--tRNA ligase (Streptococcus agalactiae serotype Ia (strain ATCC 27591 / A909 / CDC SS700)).